A 342-amino-acid chain; its full sequence is MKALAKLERGPGLTLTRVKRPEVGHNDVLIKIHRTAICGTDIHIWKWDDWAQKTIPVPMHVGHEYVGEIVEMGQEVRGFAIGDRVSGEGHITCGFCRNCRAGRRHLCRNTVGVGVNREGAFAEYLAIPAFNAFKIPPEISDDLASIFDPFGNATHTALSFNLVGEDVLITGAGPIGVMAAAIAKHVGARNVVITDINDYRLELARKMGATRAVNVSRESLRDVMADLHMTEGFDVGLEMSGVPSAFTSMLEAMNHGGKVALLGIPPAQTAIDWNQVIFKGLEIKGIYGREMFETWYKMVAMLQSGLDLSPIITHRFAADDYEKGFAAMLSGESGKVILDWTV.

Cysteine 38 provides a ligand contact to Zn(2+). Residues threonine 40 and histidine 43 each act as charge relay system in the active site. Zn(2+)-binding residues include histidine 63, glutamate 64, cysteine 93, cysteine 96, cysteine 99, and cysteine 107. Residues isoleucine 175, aspartate 195, arginine 200, 262 to 264 (LGI), and 286 to 287 (IY) each bind NAD(+).

It belongs to the zinc-containing alcohol dehydrogenase family. In terms of assembly, homotetramer. The cofactor is Zn(2+).

It is found in the cytoplasm. The catalysed reaction is L-threonine + NAD(+) = (2S)-2-amino-3-oxobutanoate + NADH + H(+). The protein operates within amino-acid degradation; L-threonine degradation via oxydo-reductase pathway; glycine from L-threonine: step 1/2. Catalyzes the NAD(+)-dependent oxidation of L-threonine to 2-amino-3-ketobutyrate. This Burkholderia ambifaria (strain MC40-6) protein is L-threonine 3-dehydrogenase.